The chain runs to 174 residues: Small ribosomal subunit protein uS5 (174 aa).

The 64-residue stretch at 16–79 folds into the S5 DRBM domain; it reads FSELIVSVRR…NAAKKNMIRV (64 aa).

It belongs to the universal ribosomal protein uS5 family. In terms of assembly, part of the 30S ribosomal subunit. Contacts proteins S4 and S8.

In terms of biological role, with S4 and S12 plays an important role in translational accuracy. Located at the back of the 30S subunit body where it stabilizes the conformation of the head with respect to the body. In Ehrlichia canis (strain Jake), this protein is Small ribosomal subunit protein uS5.